The sequence spans 283 residues: Phosphatidylserine decarboxylase proenzyme (283 aa).

Residues Asp96, His152, and Ser250 each act as charge relay system; for autoendoproteolytic cleavage activity in the active site. Ser250 (schiff-base intermediate with substrate; via pyruvic acid; for decarboxylase activity) is an active-site residue. Pyruvic acid (Ser); by autocatalysis is present on Ser250.

The protein belongs to the phosphatidylserine decarboxylase family. PSD-B subfamily. Prokaryotic type I sub-subfamily. In terms of assembly, heterodimer of a large membrane-associated beta subunit and a small pyruvoyl-containing alpha subunit. Requires pyruvate as cofactor. Is synthesized initially as an inactive proenzyme. Formation of the active enzyme involves a self-maturation process in which the active site pyruvoyl group is generated from an internal serine residue via an autocatalytic post-translational modification. Two non-identical subunits are generated from the proenzyme in this reaction, and the pyruvate is formed at the N-terminus of the alpha chain, which is derived from the carboxyl end of the proenzyme. The autoendoproteolytic cleavage occurs by a canonical serine protease mechanism, in which the side chain hydroxyl group of the serine supplies its oxygen atom to form the C-terminus of the beta chain, while the remainder of the serine residue undergoes an oxidative deamination to produce ammonia and the pyruvoyl prosthetic group on the alpha chain. During this reaction, the Ser that is part of the protease active site of the proenzyme becomes the pyruvoyl prosthetic group, which constitutes an essential element of the active site of the mature decarboxylase.

It is found in the cell membrane. The enzyme catalyses a 1,2-diacyl-sn-glycero-3-phospho-L-serine + H(+) = a 1,2-diacyl-sn-glycero-3-phosphoethanolamine + CO2. It functions in the pathway phospholipid metabolism; phosphatidylethanolamine biosynthesis; phosphatidylethanolamine from CDP-diacylglycerol: step 2/2. Catalyzes the formation of phosphatidylethanolamine (PtdEtn) from phosphatidylserine (PtdSer). This is Phosphatidylserine decarboxylase proenzyme from Acinetobacter baumannii (strain SDF).